A 321-amino-acid chain; its full sequence is Torsin-2A (321 aa).

An N-terminal signal peptide occupies residues Met-1–Ala-27. Gly-93–Ser-100 lines the ATP pocket. A glycan (N-linked (GlcNAc...) asparagine) is linked at Asn-149.

The protein belongs to the ClpA/ClpB family. Torsin subfamily. In terms of assembly, homohexamer. Interacts with TOR1AIP1.

It localises to the endoplasmic reticulum lumen. The protein is Torsin-2A (Tor2a) of Rattus norvegicus (Rat).